Consider the following 623-residue polypeptide: 1-butanol dehydrogenase (quinone) (623 aa).

The first 28 residues, 1-28, serve as a signal peptide directing secretion; it reads MKKSHAKPFALRAIVVATAAALSLPAAA. Ca(2+) is bound by residues aspartate 40, threonine 43, and aspartate 46. Glutamate 90 serves as a coordination point for pyrroloquinoline quinone. An intrachain disulfide couples cysteine 134 to cysteine 135. Pyrroloquinoline quinone-binding positions include arginine 140, threonine 184, and 202 to 204; that span reads HGS. Position 208 (glutamate 208) interacts with Ca(2+). Residues 235–274 are disordered; sequence HMGRLNGKDSTPTGDPKAPSWPDDPNSPTGKVEAWSQGGG. Ca(2+) contacts are provided by asparagine 295 and aspartate 345. The active-site Proton acceptor is aspartate 345. Arginine 374 contacts pyrroloquinoline quinone. A disordered region spans residues 420–440; the sequence is GKPIEKDNRPPQPKEGADKGE. Alanine 592 serves as a coordination point for pyrroloquinoline quinone.

It belongs to the bacterial PQQ dehydrogenase family. Pyrroloquinoline quinone serves as cofactor. Ca(2+) is required as a cofactor.

The protein resides in the periplasm. It carries out the reaction butan-1-ol + a quinone = butanal + a quinol. Its function is as follows. Involved in the metabolism of butane. May function primarily in energy generation. Catalyzes the oxidation of 1-butanol to 1-butanal. Also able to use 2-butanol and butyraldehyde, although the affinity is comparatively low. This chain is 1-butanol dehydrogenase (quinone), found in Thauera butanivorans (strain ATCC 43655 / DSM 2080 / JCM 20651 / CCUG 51053 / NBRC 103042 / IAM 12574 / Bu B1211) (Pseudomonas butanovora).